The primary structure comprises 261 residues: MFELFTALMLGILEGITEFLPVSSTGHLLIAEHWLGSRSDFFNIVIQAGAILAITFVFRKRVWSLATGLDKYSNRDYVMKLATAFLITAVVGLAVRKANWQLPETIQPIAWALIIGGIWILIAESVAKHLPERENVTWSVAIAVGLAQVVAGVFPGTSRSASTIFLAMLLGLSKRSAAAEFSFLVGIPTMFSASSYACFELFKRGELLHENWLEVSVAFVAAMLTGFAVVKWLLGYIKNHSFAPFAYYRIALGLVLLTWLT.

7 helical membrane-spanning segments follow: residues R38–F58, R75–V95, I106–V126, V136–G156, F181–L201, V217–I237, and S241–T261.

The protein belongs to the UppP family.

The protein localises to the cell inner membrane. It catalyses the reaction di-trans,octa-cis-undecaprenyl diphosphate + H2O = di-trans,octa-cis-undecaprenyl phosphate + phosphate + H(+). Functionally, catalyzes the dephosphorylation of undecaprenyl diphosphate (UPP). Confers resistance to bacitracin. The sequence is that of Undecaprenyl-diphosphatase from Xylella fastidiosa (strain 9a5c).